The primary structure comprises 489 residues: NADH-ubiquinone oxidoreductase chain 2 (489 aa).

13 consecutive transmembrane segments (helical) span residues 9 to 29 (LFPE…GVVF), 47 to 67 (LGLL…PLAV), 80 to 100 (FTYF…VMCL), 114 to 134 (IVLI…YDLI), 168 to 188 (FILG…IYGF), 216 to 236 (IFMG…AVPF), 248 to 268 (PTIV…ANML), 280 to 300 (WQQL…LAAM), 309 to 329 (LAYS…CGTI), 335 to 355 (LLIG…IVLA), 376 to 396 (ILAI…PLAG), 401 to 421 (FYLF…IGVV), and 459 to 479 (LAIT…LFLV).

Belongs to the complex I subunit 2 family.

Its subcellular location is the mitochondrion inner membrane. It carries out the reaction a ubiquinone + NADH + 5 H(+)(in) = a ubiquinol + NAD(+) + 4 H(+)(out). Its function is as follows. Core subunit of the mitochondrial membrane respiratory chain NADH dehydrogenase (Complex I) that is believed to belong to the minimal assembly required for catalysis. Complex I functions in the transfer of electrons from NADH to the respiratory chain. The immediate electron acceptor for the enzyme is believed to be ubiquinone. This Marchantia polymorpha (Common liverwort) protein is NADH-ubiquinone oxidoreductase chain 2 (ND2).